The following is a 127-amino-acid chain: Aspartate 1-decarboxylase (127 aa).

Catalysis depends on Ser25, which acts as the Schiff-base intermediate with substrate; via pyruvic acid. Ser25 carries the post-translational modification Pyruvic acid (Ser). Thr57 lines the substrate pocket. Tyr58 acts as the Proton donor in catalysis. 73-75 (GAA) serves as a coordination point for substrate.

The protein belongs to the PanD family. Heterooctamer of four alpha and four beta subunits. Requires pyruvate as cofactor. Is synthesized initially as an inactive proenzyme, which is activated by self-cleavage at a specific serine bond to produce a beta-subunit with a hydroxyl group at its C-terminus and an alpha-subunit with a pyruvoyl group at its N-terminus.

It is found in the cytoplasm. It catalyses the reaction L-aspartate + H(+) = beta-alanine + CO2. Its pathway is cofactor biosynthesis; (R)-pantothenate biosynthesis; beta-alanine from L-aspartate: step 1/1. In terms of biological role, catalyzes the pyruvoyl-dependent decarboxylation of aspartate to produce beta-alanine. In Desulfitobacterium hafniense (strain DSM 10664 / DCB-2), this protein is Aspartate 1-decarboxylase.